The following is a 160-amino-acid chain: Single-stranded DNA-binding protein (160 aa).

Functionally, binds to single-stranded DNA (ssDNA). Has a regulatory effect on phage DNA metabolism and transcription of early genes. The sequence is that of Single-stranded DNA-binding protein (XII) from Enterobacteria phage PRD1 (Bacteriophage PRD1).